A 116-amino-acid polypeptide reads, in one-letter code: NADH-ubiquinone oxidoreductase chain 3 (116 aa).

The next 3 membrane-spanning stretches (helical) occupy residues 3-23 (LITT…TISF), 56-76 (FFLI…LLPL), and 85-105 (PALT…GLIY).

It belongs to the complex I subunit 3 family.

It localises to the mitochondrion membrane. The catalysed reaction is a ubiquinone + NADH + 5 H(+)(in) = a ubiquinol + NAD(+) + 4 H(+)(out). Functionally, core subunit of the mitochondrial membrane respiratory chain NADH dehydrogenase (Complex I) that is believed to belong to the minimal assembly required for catalysis. Complex I functions in the transfer of electrons from NADH to the respiratory chain. The immediate electron acceptor for the enzyme is believed to be ubiquinone. This chain is NADH-ubiquinone oxidoreductase chain 3 (MT-ND3), found in Oncorhynchus masou (Cherry salmon).